Reading from the N-terminus, the 212-residue chain is uncharacterized protein (212 aa).

Positions 53, 74, and 97 each coordinate S-adenosyl-L-methionine.

The protein belongs to the methyltransferase superfamily. YrrT family.

Functionally, could be a S-adenosyl-L-methionine-dependent methyltransferase. This is an uncharacterized protein from Bacillus cereus (strain ATCC 10987 / NRS 248).